Here is a 262-residue protein sequence, read N- to C-terminus: Proliferating cell nuclear antigen (262 aa).

The DNA-binding element occupies 61–80 (RCDRNIAMGVNLNSMSKILK). Residue lysine 164 forms a Glycyl lysine isopeptide (Lys-Gly) (interchain with G-Cter in ubiquitin) linkage.

Belongs to the PCNA family. As to quaternary structure, homotrimer. Forms a complex with activator 1 heteropentamer in the presence of ATP. Component of the replisome complex. In terms of processing, monoubiquitinated by the UBE2B-RAD18 complex on Lys-164. Monoubiquitination at Lys-164 also takes place in undamaged proliferating cells, and is mediated by the DCX(DTL) complex, leading to enhance PCNA-dependent translesion DNA synthesis.

Its subcellular location is the nucleus. This protein is an auxiliary protein of DNA polymerase delta and is involved in the control of eukaryotic DNA replication by increasing the polymerase's processibility during elongation of the leading strand. This Coturnix japonica (Japanese quail) protein is Proliferating cell nuclear antigen (PCNA).